The following is a 296-amino-acid chain: Cytidine deaminase (296 aa).

CMP/dCMP-type deaminase domains are found at residues 47–167 (TEAE…FGPK) and 186–296 (DSAD…IDPV). A substrate-binding site is contributed by 88 to 90 (NLE). Position 101 (histidine 101) interacts with Zn(2+). The active-site Proton donor is glutamate 103. Residues cysteine 128 and cysteine 131 each coordinate Zn(2+).

This sequence belongs to the cytidine and deoxycytidylate deaminase family. Homodimer. Zn(2+) is required as a cofactor.

It catalyses the reaction cytidine + H2O + H(+) = uridine + NH4(+). It carries out the reaction 2'-deoxycytidine + H2O + H(+) = 2'-deoxyuridine + NH4(+). In terms of biological role, this enzyme scavenges exogenous and endogenous cytidine and 2'-deoxycytidine for UMP synthesis. The sequence is that of Cytidine deaminase from Shewanella baltica (strain OS155 / ATCC BAA-1091).